Consider the following 455-residue polypeptide: UDP-glycosyltransferase 87A2 (455 aa).

Methionine 1 is subject to N-acetylmethionine. Residues serine 278, 327-329, 344-352, and 366-369 each bind UDP-alpha-D-glucose; these read CDQ, HCGFNSTLE, and FWDQ.

Belongs to the UDP-glycosyltransferase family.

The sequence is that of UDP-glycosyltransferase 87A2 (UGT87A2) from Arabidopsis thaliana (Mouse-ear cress).